An 876-amino-acid chain; its full sequence is Alanine--tRNA ligase (876 aa).

Zn(2+) is bound by residues His566, His570, Cys667, and His671.

Belongs to the class-II aminoacyl-tRNA synthetase family. Zn(2+) is required as a cofactor.

The protein localises to the cytoplasm. It catalyses the reaction tRNA(Ala) + L-alanine + ATP = L-alanyl-tRNA(Ala) + AMP + diphosphate. Functionally, catalyzes the attachment of alanine to tRNA(Ala) in a two-step reaction: alanine is first activated by ATP to form Ala-AMP and then transferred to the acceptor end of tRNA(Ala). Also edits incorrectly charged Ser-tRNA(Ala) and Gly-tRNA(Ala) via its editing domain. This chain is Alanine--tRNA ligase, found in Albidiferax ferrireducens (strain ATCC BAA-621 / DSM 15236 / T118) (Rhodoferax ferrireducens).